The sequence spans 666 residues: MGTALVYHEDMTATRLLWDDPECEIECPERLTAALDGLRQRGLEERCLCLSACEASEEELGLVHSPEYIALVQKTQTLDKEELHALSKQYNAVYFHPDTFHCARLAAGAALQLVDAVLTGAVHNGLALVRPPGHHSQRAAANGFCVFNNVALAAKHAKQKYGLQRILIVDWDVHHGQGIQYIFNDDPSVLYFSWHRYEHGSFWPFLPESDADAVGQGQGQGFTVNLPWNQVGMGNADYLAAFLHVLLPLAFEFDPELVLVSAGFDSAIGDPEGQMQATPECFAHLTQLLQVLAGGRICAVLEGGYHLESLAQSVCMMVQTLLGDPTPPLLGLMVPCQSALESIQSVQTAQTPYWTSLQQNVAPVLSSSTHSPEERSLRLLGESPTCAVAEDSLSPLLDQLCLRPAPPICTAVASTVPGAALCLPPGVLHQEGSVLREETEAWARLHKSRFQDEDLATLGKILCLLDGIMDGQIRNAIATTTALATAATLDVLIQRCLARRAQRVLCVALGQLDRPLDLADDGRILWLNIRGKDAAIQSMFHFSTPLPQTTGGFLSLILGLVLPLAYGFQPDMVLMALGPAHGLQNAQAALLAAMLRSPVGGRILAVVEEESIRLLARSLAQALHGETPPSLGPFSKATPEEIQALMFLKARLEARWKLLQVAAPPP.

The segment at 1 to 323 is histone deacetylase; the sequence is MGTALVYHED…VCMMVQTLLG (323 aa). Histidine 135 is a catalytic residue.

This sequence belongs to the histone deacetylase family. HD type 2 subfamily. In terms of assembly, interacts with HDAC3. Interacts with HDAC2 and NCOR2/SMRT. Interacts with HSPA8/HSC70. Interacts with MSH2. In terms of tissue distribution, widely expressed.

The protein localises to the cytoplasm. Its subcellular location is the nucleus. It catalyses the reaction N(8)-acetylspermidine + H2O = spermidine + acetate. The catalysed reaction is N-acetylputrescine + H2O = putrescine + acetate. The enzyme catalyses N-acetylcadaverine + H2O = cadaverine + acetate. It carries out the reaction N(6)-acetyl-L-lysyl-[protein] + H2O = L-lysyl-[protein] + acetate. In terms of biological role, polyamine deacetylase (PDAC), which acts preferentially on N(8)-acetylspermidine, and also on acetylcadaverine and acetylputrescine. Exhibits attenuated catalytic activity toward N(1),N(8)-diacetylspermidine and very low activity, if any, toward N(1)-acetylspermidine. Histone deacetylase activity has been observed in vitro. Has also been shown to be involved in MSH2 deacetylation. The physiological relevance of protein/histone deacetylase activity is unclear and could be very weak. May play a role in the promotion of late stages of autophagy, possibly autophagosome-lysosome fusion and/or lysosomal exocytosis in neuroblastoma cells. May play a role in homologous recombination. May promote DNA mismatch repair. This is Polyamine deacetylase HDAC10 (Hdac10) from Mus musculus (Mouse).